Consider the following 77-residue polypeptide: Sec-independent protein translocase protein TatA 2 (77 aa).

The chain crosses the membrane as a helical span at residues 2-22 (FPGGISMTELIIILAVILLLF). Residues 52–77 (KEVKAEDVKTEERKEEKKEEKEKVEA) are disordered.

The protein belongs to the TatA/E family. As to quaternary structure, forms a complex with TatC.

It is found in the cell inner membrane. Part of the twin-arginine translocation (Tat) system that transports large folded proteins containing a characteristic twin-arginine motif in their signal peptide across membranes. TatA could form the protein-conducting channel of the Tat system. The chain is Sec-independent protein translocase protein TatA 2 from Aquifex aeolicus (strain VF5).